A 204-amino-acid chain; its full sequence is Large ribosomal subunit protein bL25 (204 aa).

Ser123 bears the Phosphoserine mark.

This sequence belongs to the bacterial ribosomal protein bL25 family. CTC subfamily. In terms of assembly, part of the 50S ribosomal subunit; part of the 5S rRNA/L5/L18/L25 subcomplex. Contacts the 5S rRNA. Binds to the 5S rRNA independently of L5 and L18.

Functionally, this is one of the proteins that binds to the 5S RNA in the ribosome where it forms part of the central protuberance. This is Large ribosomal subunit protein bL25 from Pseudomonas aeruginosa (strain UCBPP-PA14).